Reading from the N-terminus, the 628-residue chain is Probable potassium transport system protein Kup (628 aa).

12 consecutive transmembrane segments (helical) span residues phenylalanine 15–tyrosine 35, phenylalanine 49–valine 69, tryptophan 106–threonine 126, isoleucine 141–phenylalanine 161, phenylalanine 174–isoleucine 194, isoleucine 210–alanine 230, leucine 254–valine 274, leucine 295–phenylalanine 315, isoleucine 343–phenylalanine 363, leucine 369–isoleucine 389, tryptophan 398–alanine 418, and isoleucine 425–serine 445.

This sequence belongs to the HAK/KUP transporter (TC 2.A.72) family.

The protein resides in the cell inner membrane. The catalysed reaction is K(+)(in) + H(+)(in) = K(+)(out) + H(+)(out). Transport of potassium into the cell. Likely operates as a K(+):H(+) symporter. The protein is Probable potassium transport system protein Kup of Xanthobacter autotrophicus (strain ATCC BAA-1158 / Py2).